We begin with the raw amino-acid sequence, 285 residues long: Golgi to ER traffic protein 2 (285 aa).

Positions Met-1–Arg-10 are enriched in basic and acidic residues. Residues Met-1–Asp-71 form a disordered region. Ser-2 carries the N-acetylserine modification. Residues Ser-2–Arg-148 are Cytoplasmic-facing. The segment covering Arg-11 to Lys-20 has biased composition (basic residues). Over residues Gly-24–Asn-42 the composition is skewed to polar residues. Phosphoserine is present on Ser-45. The segment covering Ala-49–Ser-60 has biased composition (low complexity). The chain crosses the membrane as a helical span at residues Leu-149–Ile-169. The Lumenal portion of the chain corresponds to Thr-170–Asn-196. Residues Asn-173 and Asn-196 are each glycosylated (N-linked (GlcNAc...) asparagine). Residues Phe-197 to Leu-216 form a helical membrane-spanning segment. The Cytoplasmic portion of the chain corresponds to Lys-217 to Asp-263. A helical membrane pass occupies residues Leu-264 to Tyr-284. Leu-285 is a topological domain (lumenal).

This sequence belongs to the GET2 family. As to quaternary structure, component of the Golgi to ER traffic (GET) complex, which is composed of GET1, GET2 and GET3. Within the complex, GET1 and GET2 form a heterotetramer which is stabilized by phosphatidylinositol binding and which binds to the GET3 homodimer.

Its subcellular location is the endoplasmic reticulum membrane. The protein resides in the golgi apparatus membrane. In terms of biological role, required for the post-translational delivery of tail-anchored (TA) proteins to the endoplasmic reticulum. Together with GET1, acts as a membrane receptor for soluble GET3, which recognizes and selectively binds the transmembrane domain of TA proteins in the cytosol. The GET complex cooperates with the HDEL receptor ERD2 to mediate the ATP-dependent retrieval of resident ER proteins that contain a C-terminal H-D-E-L retention signal from the Golgi to the ER. Involved in DNA replication and DNA damage response and also in cell wall function. The chain is Golgi to ER traffic protein 2 from Saccharomyces cerevisiae (strain YJM789) (Baker's yeast).